The chain runs to 596 residues: Chaperone protein DnaK (596 aa).

Residue Thr180 is modified to Phosphothreonine; by autocatalysis.

It belongs to the heat shock protein 70 family.

Acts as a chaperone. In Thermosipho melanesiensis (strain DSM 12029 / CIP 104789 / BI429), this protein is Chaperone protein DnaK.